The following is a 331-amino-acid chain: B-box zinc finger protein 21 (331 aa).

Cysteine 5, cysteine 8, cysteine 28, histidine 34, cysteine 60, cysteine 63, cysteine 83, and histidine 93 together coordinate Zn(2+). The segment at 5–47 (CDVCDKEEASVFCTADEASLCGGCDHQVHHANKLASKHLRFSL) adopts a B box-type 1; atypical zinc-finger fold. Residues 60 to 102 (CDICQDKKALLFCQQDRAILCKDCDSSIHAANEHTKKHDRFLL) form a B box-type 2; atypical zinc finger. Low complexity-rich tracts occupy residues 115–126 (KPTSKSSSSSSS) and 228–238 (NNNNNNNNNNN). Disordered stretches follow at residues 115-167 (KPTS…GGDA) and 209-241 (DDDGVLPYMEPEDDNNTKRNNNNNNNNNNNTVS).

Interacts with COP1, HY5 and BBX32. Interacts with FLZ1.

The protein resides in the nucleus. Its function is as follows. Transcription activator that acts as a positive regulator of seedling photomorphogenesis. Acts downstream of COP1 and play an important role in early and long-term adjustment of the shade avoidance syndrome (SAS) responses in natural environments. This is B-box zinc finger protein 21 from Arabidopsis thaliana (Mouse-ear cress).